The following is a 295-amino-acid chain: 4-hydroxy-tetrahydrodipicolinate synthase (295 aa).

Residue Thr46 participates in pyruvate binding. Catalysis depends on Tyr134, which acts as the Proton donor/acceptor. Residue Lys162 is the Schiff-base intermediate with substrate of the active site. Pyruvate is bound at residue Ile205.

This sequence belongs to the DapA family. In terms of assembly, homotetramer; dimer of dimers.

Its subcellular location is the cytoplasm. The catalysed reaction is L-aspartate 4-semialdehyde + pyruvate = (2S,4S)-4-hydroxy-2,3,4,5-tetrahydrodipicolinate + H2O + H(+). It functions in the pathway amino-acid biosynthesis; L-lysine biosynthesis via DAP pathway; (S)-tetrahydrodipicolinate from L-aspartate: step 3/4. Its function is as follows. Catalyzes the condensation of (S)-aspartate-beta-semialdehyde [(S)-ASA] and pyruvate to 4-hydroxy-tetrahydrodipicolinate (HTPA). The chain is 4-hydroxy-tetrahydrodipicolinate synthase from Anaeromyxobacter dehalogenans (strain 2CP-C).